Reading from the N-terminus, the 157-residue chain is Endoribonuclease YbeY (157 aa).

Zn(2+) is bound by residues histidine 116, histidine 120, and histidine 126.

The protein belongs to the endoribonuclease YbeY family. Zn(2+) is required as a cofactor.

It localises to the cytoplasm. Functionally, single strand-specific metallo-endoribonuclease involved in late-stage 70S ribosome quality control and in maturation of the 3' terminus of the 16S rRNA. The polypeptide is Endoribonuclease YbeY (Paenarthrobacter aurescens (strain TC1)).